The following is a 330-amino-acid chain: Type II methyltransferase M.HaeIII (330 aa).

The region spanning 1 to 327 (MNLISLFSGA…KTIKSALEIC (327 aa)) is the SAM-dependent MTase C5-type domain. Residues Glu29 and 50–51 (DI) contribute to the ATP site. The active site involves Cys71. An ATP-binding site is contributed by Asn260.

Belongs to the class I-like SAM-binding methyltransferase superfamily. C5-methyltransferase family. As to quaternary structure, monomer.

It carries out the reaction a 2'-deoxycytidine in DNA + S-adenosyl-L-methionine = a 5-methyl-2'-deoxycytidine in DNA + S-adenosyl-L-homocysteine + H(+). In terms of biological role, a methylase, recognizes the double-stranded sequence 5'-GGCC-3', methylates C-3 on both strands, and protects the DNA from cleavage by the HaeIII endonuclease. This is Type II methyltransferase M.HaeIII (haeIIIM) from Haemophilus aegyptius.